Consider the following 493-residue polypeptide: Glutamate--tRNA ligase (493 aa).

Positions proline 10–leucine 20 match the 'HIGH' region motif. The 'KMSKS' region signature appears at lysine 254–arginine 258. Residue lysine 257 participates in ATP binding.

This sequence belongs to the class-I aminoacyl-tRNA synthetase family. Glutamate--tRNA ligase type 1 subfamily. In terms of assembly, monomer.

Its subcellular location is the cytoplasm. The catalysed reaction is tRNA(Glu) + L-glutamate + ATP = L-glutamyl-tRNA(Glu) + AMP + diphosphate. Functionally, catalyzes the attachment of glutamate to tRNA(Glu) in a two-step reaction: glutamate is first activated by ATP to form Glu-AMP and then transferred to the acceptor end of tRNA(Glu). The polypeptide is Glutamate--tRNA ligase (Corynebacterium glutamicum (strain ATCC 13032 / DSM 20300 / JCM 1318 / BCRC 11384 / CCUG 27702 / LMG 3730 / NBRC 12168 / NCIMB 10025 / NRRL B-2784 / 534)).